A 74-amino-acid polypeptide reads, in one-letter code: Protein krueppel (74 aa).

C2H2-type zinc fingers lie at residues 1–4 (ERTH), 10–32 (FKCP…MRLH), 38–60 (YHCS…LRVH), and 66–74 (YTCEICKAK).

Belongs to the krueppel C2H2-type zinc-finger protein family.

The protein resides in the nucleus. Krueppel is a gap class segmentation protein. The protein is Protein krueppel (Kr) of Bradysia coprophila (Dark-winged fungus gnat).